The following is a 347-amino-acid chain: Heat-inducible transcription repressor HrcA (347 aa).

Belongs to the HrcA family.

Its function is as follows. Negative regulator of class I heat shock genes (grpE-dnaK-dnaJ and groELS operons). Prevents heat-shock induction of these operons. This Nocardia farcinica (strain IFM 10152) protein is Heat-inducible transcription repressor HrcA.